The chain runs to 228 residues: Ion-translocating oxidoreductase complex subunit E (228 aa).

Transmembrane regions (helical) follow at residues 24 to 44 (LLGL…LGLG), 73 to 93 (VFVL…NAFF), 95 to 115 (ELYL…AIIG), 130 to 150 (LADG…LGAL), and 184 to 204 (GFLL…LIAL).

The protein belongs to the NqrDE/RnfAE family. In terms of assembly, the complex is composed of six subunits: RnfA, RnfB, RnfC, RnfD, RnfE and RnfG.

Its subcellular location is the cell inner membrane. Its function is as follows. Part of a membrane-bound complex that couples electron transfer with translocation of ions across the membrane. This is Ion-translocating oxidoreductase complex subunit E from Thioalkalivibrio sulfidiphilus (strain HL-EbGR7).